The sequence spans 189 residues: SAGA-associated factor 11 homolog (189 aa).

The segment at 94–115 (CTCPNCDRLVAATRFAPHLEKC) adopts an SGF11-type zinc-finger fold. The tract at residues 128-189 (RRLATKEGSS…GSKKNNGKTF (62 aa)) is disordered. Low complexity predominate over residues 136–145 (SSASSTSTST). A Phosphoserine modification is found at S165. A compositionally biased stretch (low complexity) spans 175-189 (NSRNNGSKKNNGKTF).

The protein belongs to the SGF11 family. Component of some SAGA transcription coactivator-HAT complexes, at least composed of Ada2b, not/nonstop, Pcaf/Gcn5, Sgf11 and Spt3. Within the SAGA complex, Sgf11, e(y)2, and not/nonstop form an additional subcomplex of SAGA called the DUB module (deubiquitination module). Interacts directly with not/nonstop. Interacts with the AMEX complex component xmas-2. Interacts with Cbp80; important for promoter recruitment of Sgf11 that is not associated with the DUB module.

It is found in the nucleus. Its subcellular location is the nucleoplasm. The protein resides in the cytoplasm. In terms of biological role, component of the transcription regulatory histone acetylation (HAT) complex SAGA, a multiprotein complex that activates transcription by remodeling chromatin and mediating histone acetylation and deubiquitination. Within the SAGA complex, participates in a subcomplex that specifically deubiquitinates histone H2B. The SAGA complex is recruited to specific gene promoters by activators, where it is required for transcription. Required for nuclear receptor-mediated transactivation. Binds independently on SAGA to promoters in an RNA-dependent manner. Binds to mRNA and is essential for total mRNA export from the nucleus. Required to counteract heterochromatin silencing. Controls the development of neuronal connectivity in visual system by being required for accurate axon targeting in the optic lobe. Required for expression of ecdysone-induced genes such as br/broad. This chain is SAGA-associated factor 11 homolog, found in Drosophila virilis (Fruit fly).